We begin with the raw amino-acid sequence, 1059 residues long: DNA (cytosine-5)-methyltransferase CMT1 (1059 aa).

Disordered regions lie at residues 1-196 (MVPE…GALA) and 230-272 (CVGE…DEAR). Residues 29–41 (AEAEAVADLDEID) show a composition bias toward acidic residues. Composition is skewed to basic and acidic residues over residues 42–79 (REMS…EKAA), 92–129 (REMP…EKAA), and 147–157 (SRGKRQRGVEK). Basic residues predominate over residues 158–167 (VKRRTRKKTA). Residues 252–262 (RRVEDSDDHFV) show a composition bias toward basic and acidic residues. The region spanning 312–436 (EIYHLDDDVY…VAYSTFANLP (125 aa)) is the BAH domain. One can recognise an SAM-dependent MTase C5-type domain in the interval 479–1017 (ASLLDLYSGC…YALGLAYRGE (539 aa)). Residues 584 to 649 (FDVEELLEIC…KGHKENILPL (66 aa)) enclose the Chromo domain. C662 is a catalytic residue.

This sequence belongs to the class I-like SAM-binding methyltransferase superfamily. C5-methyltransferase family.

It localises to the nucleus. It catalyses the reaction a 2'-deoxycytidine in DNA + S-adenosyl-L-methionine = a 5-methyl-2'-deoxycytidine in DNA + S-adenosyl-L-homocysteine + H(+). Involved in CpXpG DNA methylation. May not play a major role in maintaining CpXpG methylation. This chain is DNA (cytosine-5)-methyltransferase CMT1, found in Oryza sativa subsp. japonica (Rice).